A 288-amino-acid chain; its full sequence is Fibroblast growth factor 2 (288 aa).

Positions 1-142 (MVGVGGGDVE…TMAAGSITTL (142 aa)) are excised as a propeptide. A disordered region spans residues 1–156 (MVGVGGGDVE…EDGGSGAFPP (156 aa)). A compositionally biased stretch (basic and acidic residues) spans 72–84 (ERPSGSRLGDHGR). 3 positions are modified to omega-N-methylarginine; alternate: arginine 108, arginine 110, and arginine 112. Arginine 108, arginine 110, and arginine 112 each carry symmetric dimethylarginine; alternate. The span at 113-132 (GTAAPRAAPAARGSRPGPAG) shows a compositional bias: low complexity. Position 169 (asparagine 169) interacts with heparin. The short motif at 179–181 (DGR) is the Cell attachment site; atypical element. The residue at position 215 (tyrosine 215) is a Phosphotyrosine; by TEC. A Cell attachment site; atypical motif is present at residues 221–223 (DGR). Residue lysine 228 forms a Glycyl lysine isopeptide (Lys-Gly) (interchain with G-Cter in SUMO1) linkage. The tract at residues 261 to 277 (KRTGQYKLGSKTGPGQK) is heparin-binding.

It belongs to the heparin-binding growth factors family. As to quaternary structure, monomer. Homodimer. Interacts with FGFR1, FGFR2, FGFR3 and FGFR4. Affinity between fibroblast growth factors (FGFs) and their receptors is increased by heparan sulfate glycosaminoglycans that function as coreceptors. Interacts with CSPG4, FGFBP1 and TEC. Found in a complex with FGFBP1, FGF1 and FGF2. Interacts with FGFBP3. Interacts with integrin ITGAV:ITGB3; the interaction is required for FGF2 signaling. Interacts with SNORC (via the extracellular domain). Interacts with glypican GPC3. Phosphorylation at Tyr-215 regulates FGF2 unconventional secretion.

It is found in the secreted. Its subcellular location is the nucleus. In terms of biological role, acts as a ligand for FGFR1, FGFR2, FGFR3 and FGFR4. Also acts as an integrin ligand which is required for FGF2 signaling. Binds to integrin ITGAV:ITGB3. Plays an important role in the regulation of cell survival, cell division, cell differentiation and cell migration. Functions as a potent mitogen in vitro. Can induce angiogenesis. Mediates phosphorylation of ERK1/2 and thereby promotes retinal lens fiber differentiation. The sequence is that of Fibroblast growth factor 2 from Pan troglodytes (Chimpanzee).